A 150-amino-acid polypeptide reads, in one-letter code: Ribosome-binding factor A (150 aa).

Residues 126–150 (EVARDLSHDDDEDGGADEAPRNGDE) form a disordered region.

This sequence belongs to the RbfA family. Monomer. Binds 30S ribosomal subunits, but not 50S ribosomal subunits or 70S ribosomes.

Its subcellular location is the cytoplasm. Functionally, one of several proteins that assist in the late maturation steps of the functional core of the 30S ribosomal subunit. Associates with free 30S ribosomal subunits (but not with 30S subunits that are part of 70S ribosomes or polysomes). Required for efficient processing of 16S rRNA. May interact with the 5'-terminal helix region of 16S rRNA. This Brucella suis (strain ATCC 23445 / NCTC 10510) protein is Ribosome-binding factor A.